A 219-amino-acid polypeptide reads, in one-letter code: Cytidylate kinase (219 aa).

ATP is bound at residue 21-29 (GPAASGKGT).

The protein belongs to the cytidylate kinase family. Type 1 subfamily.

It localises to the cytoplasm. It catalyses the reaction CMP + ATP = CDP + ADP. It carries out the reaction dCMP + ATP = dCDP + ADP. The sequence is that of Cytidylate kinase from Rickettsia felis (strain ATCC VR-1525 / URRWXCal2) (Rickettsia azadi).